Consider the following 461-residue polypeptide: Pup--protein ligase (461 aa).

Glu-9 lines the Mg(2+) pocket. Arg-53 provides a ligand contact to ATP. Mg(2+) is bound at residue Tyr-55. Asp-57 (proton acceptor) is an active-site residue. Glu-63 serves as a coordination point for Mg(2+). ATP is bound by residues Thr-66 and Trp-420.

This sequence belongs to the Pup ligase/Pup deamidase family. Pup-conjugating enzyme subfamily.

The catalysed reaction is ATP + [prokaryotic ubiquitin-like protein]-L-glutamate + [protein]-L-lysine = ADP + phosphate + N(6)-([prokaryotic ubiquitin-like protein]-gamma-L-glutamyl)-[protein]-L-lysine.. The protein operates within protein degradation; proteasomal Pup-dependent pathway. It functions in the pathway protein modification; protein pupylation. Its function is as follows. Catalyzes the covalent attachment of the prokaryotic ubiquitin-like protein modifier Pup to the proteasomal substrate proteins, thereby targeting them for proteasomal degradation. This tagging system is termed pupylation. The ligation reaction involves the side-chain carboxylate of the C-terminal glutamate of Pup and the side-chain amino group of a substrate lysine. This Renibacterium salmoninarum (strain ATCC 33209 / DSM 20767 / JCM 11484 / NBRC 15589 / NCIMB 2235) protein is Pup--protein ligase.